The following is a 309-amino-acid chain: DnaJ-like protein MG002 homolog (309 aa).

The J domain occupies Met1–Phe66.

The protein is DnaJ-like protein MG002 homolog of Mycoplasma pneumoniae (strain ATCC 29342 / M129 / Subtype 1) (Mycoplasmoides pneumoniae).